A 105-amino-acid polypeptide reads, in one-letter code: Phosphoribosyl-ATP pyrophosphatase (105 aa).

It belongs to the PRA-PH family.

The protein resides in the cytoplasm. It catalyses the reaction 1-(5-phospho-beta-D-ribosyl)-ATP + H2O = 1-(5-phospho-beta-D-ribosyl)-5'-AMP + diphosphate + H(+). Its pathway is amino-acid biosynthesis; L-histidine biosynthesis; L-histidine from 5-phospho-alpha-D-ribose 1-diphosphate: step 2/9. This chain is Phosphoribosyl-ATP pyrophosphatase, found in Ruegeria pomeroyi (strain ATCC 700808 / DSM 15171 / DSS-3) (Silicibacter pomeroyi).